The chain runs to 835 residues: Protein translocase subunit SecA (835 aa).

Residues Gln85, 103 to 107 (GEGKT), and Asp492 contribute to the ATP site. The segment at 788-807 (VQGEAVHPSSDGEEAKKKPV) is disordered. The Zn(2+) site is built by Cys819, Cys821, Cys830, and Cys831.

It belongs to the SecA family. As to quaternary structure, monomer and homodimer. Part of the essential Sec protein translocation apparatus which comprises SecA, SecYEG and auxiliary proteins SecDF. Other proteins may also be involved. Zn(2+) is required as a cofactor.

The protein resides in the cell membrane. It localises to the cytoplasm. It carries out the reaction ATP + H2O + cellular proteinSide 1 = ADP + phosphate + cellular proteinSide 2.. Part of the Sec protein translocase complex. Interacts with the SecYEG preprotein conducting channel. Has a central role in coupling the hydrolysis of ATP to the transfer of proteins into and across the cell membrane, serving as an ATP-driven molecular motor driving the stepwise translocation of polypeptide chains across the membrane. This is Protein translocase subunit SecA from Bacillus cereus (strain ATCC 14579 / DSM 31 / CCUG 7414 / JCM 2152 / NBRC 15305 / NCIMB 9373 / NCTC 2599 / NRRL B-3711).